The following is a 72-amino-acid chain: Cytochrome b-c1 complex subunit 8-1, mitochondrial (72 aa).

At 1–41 (MGKQPVKLKAVVYALSPFQQKIMTGLWKDLPEKIHHKVSEN) the chain is on the mitochondrial matrix side. The helical transmembrane segment at 42–58 (WISATLLVTPVVGTYWY) threads the bilayer. Topologically, residues 59–72 (AQYFKEQEKLEHRF) are mitochondrial intermembrane.

This sequence belongs to the UQCRQ/QCR8 family. Component of the ubiquinol-cytochrome c oxidoreductase (cytochrome b-c1 complex, complex III, CIII), a multisubunit enzyme composed of 10 subunits. The complex is composed of 3 respiratory subunits cytochrome b (MT-CYB), cytochrome c1 (CYC1-1 or CYC1-2) and Rieske protein (UCR1-1 or UCR1-2), 2 core protein subunits MPPalpha1 (or MPPalpha2) and MPPB, and 5 low-molecular weight protein subunits QCR7-1 (or QCR7-2), UCRQ-1 (or UCRQ-2), QCR9, UCRY and probably QCR6-1 (or QCR6-2). The complex exists as an obligatory dimer and forms supercomplexes (SCs) in the inner mitochondrial membrane with NADH-ubiquinone oxidoreductase (complex I, CI), resulting in different assemblies (supercomplexes SCI(1)III(2) and SCI(2)III(4)).

It is found in the mitochondrion inner membrane. Component of the ubiquinol-cytochrome c oxidoreductase, a multisubunit transmembrane complex that is part of the mitochondrial electron transport chain which drives oxidative phosphorylation. The respiratory chain contains 3 multisubunit complexes succinate dehydrogenase (complex II, CII), ubiquinol-cytochrome c oxidoreductase (cytochrome b-c1 complex, complex III, CIII) and cytochrome c oxidase (complex IV, CIV), that cooperate to transfer electrons derived from NADH and succinate to molecular oxygen, creating an electrochemical gradient over the inner membrane that drives transmembrane transport and the ATP synthase. The cytochrome b-c1 complex catalyzes electron transfer from ubiquinol to cytochrome c, linking this redox reaction to translocation of protons across the mitochondrial inner membrane, with protons being carried across the membrane as hydrogens on the quinol. In the process called Q cycle, 2 protons are consumed from the matrix, 4 protons are released into the intermembrane space and 2 electrons are passed to cytochrome c. In Arabidopsis thaliana (Mouse-ear cress), this protein is Cytochrome b-c1 complex subunit 8-1, mitochondrial (UCRQ-1).